A 388-amino-acid polypeptide reads, in one-letter code: Succinate--CoA ligase [ADP-forming] subunit beta (388 aa).

The ATP-grasp domain occupies 9-244 (KQLFAEYGLP…PSQDDAREAH (236 aa)). Residues lysine 46, 53 to 55 (GRG), glutamate 99, threonine 102, and glutamate 107 contribute to the ATP site. Mg(2+) is bound by residues asparagine 199 and aspartate 213. Residues asparagine 264 and 321-323 (GIV) each bind substrate.

It belongs to the succinate/malate CoA ligase beta subunit family. Heterotetramer of two alpha and two beta subunits. Requires Mg(2+) as cofactor.

It carries out the reaction succinate + ATP + CoA = succinyl-CoA + ADP + phosphate. It catalyses the reaction GTP + succinate + CoA = succinyl-CoA + GDP + phosphate. It functions in the pathway carbohydrate metabolism; tricarboxylic acid cycle; succinate from succinyl-CoA (ligase route): step 1/1. Functionally, succinyl-CoA synthetase functions in the citric acid cycle (TCA), coupling the hydrolysis of succinyl-CoA to the synthesis of either ATP or GTP and thus represents the only step of substrate-level phosphorylation in the TCA. The beta subunit provides nucleotide specificity of the enzyme and binds the substrate succinate, while the binding sites for coenzyme A and phosphate are found in the alpha subunit. The chain is Succinate--CoA ligase [ADP-forming] subunit beta from Pseudomonas aeruginosa (strain UCBPP-PA14).